A 293-amino-acid polypeptide reads, in one-letter code: Phosphatidate cytidylyltransferase (293 aa).

8 helical membrane passes run 6 to 26, 51 to 71, 73 to 93, 97 to 117, 157 to 177, 195 to 215, 218 to 238, and 273 to 293; these read IISA…GGWY, IAPA…SATV, PHLT…YLLF, MATI…GYLP, LLVT…AYIM, VEGS…GAWY, WPYW…VSLL, and VFTA…LNNL.

This sequence belongs to the CDS family.

The protein resides in the cell membrane. The catalysed reaction is a 1,2-diacyl-sn-glycero-3-phosphate + CTP + H(+) = a CDP-1,2-diacyl-sn-glycerol + diphosphate. It participates in phospholipid metabolism; CDP-diacylglycerol biosynthesis; CDP-diacylglycerol from sn-glycerol 3-phosphate: step 3/3. The protein is Phosphatidate cytidylyltransferase (cdsA) of Synechocystis sp. (strain ATCC 27184 / PCC 6803 / Kazusa).